The chain runs to 415 residues: Phosphoglycerate kinase (415 aa).

Residues 28 to 30, R44, 67 to 70, R124, and R164 each bind substrate; these read DLN and HQGR. ATP is bound by residues E336 and 362-365; that span reads GGHF.

This sequence belongs to the phosphoglycerate kinase family.

The protein resides in the cytoplasm. The enzyme catalyses (2R)-3-phosphoglycerate + ATP = (2R)-3-phospho-glyceroyl phosphate + ADP. The protein operates within carbohydrate degradation; glycolysis; pyruvate from D-glyceraldehyde 3-phosphate: step 2/5. The polypeptide is Phosphoglycerate kinase (pgk) (Aeropyrum pernix (strain ATCC 700893 / DSM 11879 / JCM 9820 / NBRC 100138 / K1)).